Here is a 155-residue protein sequence, read N- to C-terminus: MSGVILDLQLACENEQGLPAETDFQRWLEAVLPQFQPESEVTIRLVDEAESRELNHTYRSKDKPTNVLSFPFEAPPGIELPLLGDLIICRQVVEQEAVEQGKTREAHWAHMVIHGSLHLLGYDHIEDDEAEEMESLETEIMLALGYPDPYISEKE.

Residues His114, His118, and His124 each contribute to the Zn(2+) site.

This sequence belongs to the endoribonuclease YbeY family. The cofactor is Zn(2+).

It localises to the cytoplasm. Single strand-specific metallo-endoribonuclease involved in late-stage 70S ribosome quality control and in maturation of the 3' terminus of the 16S rRNA. This chain is Endoribonuclease YbeY, found in Erwinia tasmaniensis (strain DSM 17950 / CFBP 7177 / CIP 109463 / NCPPB 4357 / Et1/99).